A 457-amino-acid polypeptide reads, in one-letter code: Proton-translocating ferredoxin:NAD(+) oxidoreductase complex subunit C (457 aa).

2 4Fe-4S ferredoxin-type domains span residues 353-386 (TKNDVNDGKESSCIRCGRCLKACPMHLNPSMLSI) and 396-427 (AKEEYNLLDCVECGSCVYTCPAKRKIVQYIRY). [4Fe-4S] cluster contacts are provided by Cys-365, Cys-368, Cys-371, Cys-375, Cys-405, Cys-408, Cys-411, and Cys-415. Positions 433–457 (RAAGEREKAKAAKAKEKKEKEEVLK) are disordered.

The protein belongs to the 4Fe4S bacterial-type ferredoxin family. RnfC subfamily. The complex is composed of six subunits: RnfA, RnfB, RnfC, RnfD, RnfE and RnfG. The cofactor is [4Fe-4S] cluster.

The protein resides in the cell membrane. In terms of biological role, part of a membrane-bound complex that couples electron transfer with translocation of ions across the membrane. Couples electron transfer from reduced ferredoxin to NAD(+) with translocation of H(+) out of the cell. Essential for energy conservation during autotrophic growth. Contributes to ATP synthesis during heterotrophic growth. This chain is Proton-translocating ferredoxin:NAD(+) oxidoreductase complex subunit C, found in Clostridium ljungdahlii (strain ATCC 55383 / DSM 13528 / PETC).